The primary structure comprises 284 residues: Tropomyosin alpha-1 chain (284 aa).

Met-1 bears the N-acetylmethionine mark. A disordered region spans residues 1 to 38 (MDAIKKKMQMLKLDKENALDRAEQAEADKKAAEDRSKQ). Residues 1–284 (MDAIKKKMQM…DHALNDMTSI (284 aa)) are a coiled coil. Positions 12 to 38 (KLDKENALDRAEQAEADKKAAEDRSKQ) are enriched in basic and acidic residues. Ser-45 is modified (phosphoserine). The disordered stretch occupies residues 116-136 (AEKAADESERGMKVIESRAQK). A phosphoserine mark is found at Ser-174, Ser-186, Ser-206, and Ser-252. A Phosphotyrosine modification is found at Tyr-261. A phosphoserine mark is found at Ser-271 and Ser-283.

Belongs to the tropomyosin family. Homodimer. Heterodimer of an alpha (TPM1, TPM3 or TPM4) and a beta (TPM2) chain. Interacts with HRG (via the HRR domain); the interaction contributes to the antiangiogenic properties of the histidine/proline-rich region (HRR) of HRG. Interacts (via N-terminus) with LMOD2 (via N-terminus) and TMOD1 (via N-terminus). In terms of processing, phosphorylated at Ser-283 by DAPK1 in response to oxidative stress and this phosphorylation enhances stress fiber formation in endothelial cells.

It is found in the cytoplasm. The protein localises to the cytoskeleton. Binds to actin filaments in muscle and non-muscle cells. Plays a central role, in association with the troponin complex, in the calcium dependent regulation of vertebrate striated muscle contraction. Smooth muscle contraction is regulated by interaction with caldesmon. In non-muscle cells is implicated in stabilizing cytoskeleton actin filaments. The protein is Tropomyosin alpha-1 chain (Tpm1) of Mus musculus (Mouse).